The primary structure comprises 318 residues: tRNA-cytidine(32) 2-sulfurtransferase (318 aa).

A PP-loop motif motif is present at residues 52 to 57 (SGGKDS). [4Fe-4S] cluster contacts are provided by C127, C130, and C218.

Belongs to the TtcA family. Homodimer. Mg(2+) serves as cofactor. Requires [4Fe-4S] cluster as cofactor.

The protein resides in the cytoplasm. The enzyme catalyses cytidine(32) in tRNA + S-sulfanyl-L-cysteinyl-[cysteine desulfurase] + AH2 + ATP = 2-thiocytidine(32) in tRNA + L-cysteinyl-[cysteine desulfurase] + A + AMP + diphosphate + H(+). The protein operates within tRNA modification. Its function is as follows. Catalyzes the ATP-dependent 2-thiolation of cytidine in position 32 of tRNA, to form 2-thiocytidine (s(2)C32). The sulfur atoms are provided by the cysteine/cysteine desulfurase (IscS) system. This chain is tRNA-cytidine(32) 2-sulfurtransferase, found in Actinobacillus pleuropneumoniae serotype 5b (strain L20).